Here is a 65-residue protein sequence, read N- to C-terminus: Cecropin (65 aa).

An N-terminal signal peptide occupies residues 1 to 23 (MNFVKVLFFISACILIMLSAVSG).

This sequence belongs to the cecropin family.

Its subcellular location is the secreted. Its function is as follows. Has antibacterial activity. This Galleria mellonella (Greater wax moth) protein is Cecropin (LOC113514368).